The following is a 274-amino-acid chain: Dermonecrotic toxin LcsSicTox-betaIC1 (274 aa).

The active site involves H5. Residues E25 and D27 each contribute to the Mg(2+) site. The Nucleophile role is filled by H41. Cystine bridges form between C45-C51 and C47-C190. N-linked (GlcNAc...) asparagine glycosylation occurs at N66. D85 contributes to the Mg(2+) binding site.

Belongs to the arthropod phospholipase D family. Class II subfamily. It depends on Mg(2+) as a cofactor. Expressed by the venom gland.

The protein resides in the secreted. It catalyses the reaction an N-(acyl)-sphingosylphosphocholine = an N-(acyl)-sphingosyl-1,3-cyclic phosphate + choline. It carries out the reaction an N-(acyl)-sphingosylphosphoethanolamine = an N-(acyl)-sphingosyl-1,3-cyclic phosphate + ethanolamine. The catalysed reaction is a 1-acyl-sn-glycero-3-phosphocholine = a 1-acyl-sn-glycero-2,3-cyclic phosphate + choline. The enzyme catalyses a 1-acyl-sn-glycero-3-phosphoethanolamine = a 1-acyl-sn-glycero-2,3-cyclic phosphate + ethanolamine. Functionally, dermonecrotic toxins cleave the phosphodiester linkage between the phosphate and headgroup of certain phospholipids (sphingolipid and lysolipid substrates), forming an alcohol (often choline) and a cyclic phosphate. This toxin acts on sphingomyelin (SM). It may also act on ceramide phosphoethanolamine (CPE), lysophosphatidylcholine (LPC) and lysophosphatidylethanolamine (LPE), but not on lysophosphatidylserine (LPS), and lysophosphatidylglycerol (LPG). It acts by transphosphatidylation, releasing exclusively cyclic phosphate products as second products. Induces dermonecrosis, hemolysis, increased vascular permeability, edema, inflammatory response, and platelet aggregation. The chain is Dermonecrotic toxin LcsSicTox-betaIC1 from Loxosceles cf. spinulosa (strain GJB-2008) (Recluse spider).